Consider the following 265-residue polypeptide: Mlc titration factor A (265 aa).

4 residues coordinate Zn(2+): H111, H148, H152, and E211.

The protein belongs to the MtfA family. Interacts with Mlc. It depends on Zn(2+) as a cofactor.

It is found in the cytoplasm. Involved in the modulation of the activity of the glucose-phosphotransferase system (glucose-PTS). Interacts with the transcriptional repressor Mlc, preventing its interaction with DNA and leading to the modulation of expression of genes regulated by Mlc, including ptsG, which encodes the PTS system glucose-specific EIICB component. Its function is as follows. Shows zinc-dependent metallopeptidase activity. The protein is Mlc titration factor A of Shigella dysenteriae serotype 1 (strain Sd197).